A 131-amino-acid chain; its full sequence is MIVCAEMDEQWGYVGAKSRQRWLFYAYDSLRKTVVAHVFGERTMATLGRLMSLLSPFDVVIWMTDGWPLYESRLKGKLHVISKRYTQRIERHNLNLRQHLARLGRKSLSFSKSVELHDKVIGHYLNIKHYQ.

Belongs to the transposase 27 family.

In terms of biological role, absolutely required for transposition of IS1. The protein is Insertion element IS1 protein InsB (insB) of Shigella sonnei.